A 352-amino-acid polypeptide reads, in one-letter code: Endoplasmic reticulum GDP-fucose transporter (352 aa).

10 helical membrane passes run 9 to 29, 34 to 54, 70 to 90, 96 to 116, 126 to 146, 163 to 183, 201 to 221, 249 to 271, 276 to 298, and 305 to 325; these read LGML…ELII, GAGN…GLVF, YVIL…AFNF, LHMI…IVLL, SSVA…SGDV, FFWW…TAYM, ALFF…GNIV, LMLF…VYVL, ASLT…SIIY, and LNHW…ANVI. The Prevents secretion from ER signature appears at 350 to 352; the sequence is KVE.

It belongs to the nucleotide-sugar transporter family. SLC35B subfamily.

The protein resides in the endoplasmic reticulum membrane. In terms of biological role, sugar transporter that specifically mediates the transport of UDP-N-acetylglucosamine (UDP-GlcNAc), GDP-fucose and UDP-xylose. Functions redundantly with Gfr in the O-fucosylation of Notch, positively regulating Notch signaling. Involved in the biosynthesis of heparan sulfate-glycosaminoglycan (HS-GAG) and in Dpp signaling in the wing imaginal disk. This chain is Endoplasmic reticulum GDP-fucose transporter, found in Drosophila melanogaster (Fruit fly).